The following is a 179-amino-acid chain: UPF0227 protein Sbal195_2522 (179 aa).

This sequence belongs to the UPF0227 family.

This Shewanella baltica (strain OS195) protein is UPF0227 protein Sbal195_2522.